A 350-amino-acid polypeptide reads, in one-letter code: 26S proteasome non-ATPase regulatory subunit 8 (350 aa).

Residues 1-24 (MFIKGRAPRAPPRERRRATRGGLR) are disordered. At S106 the chain carries Phosphoserine. The 170-residue stretch at 162 to 331 (PSFERYMAQL…QQKPEDTTIP (170 aa)) folds into the PCI domain. K297 participates in a covalent cross-link: Glycyl lysine isopeptide (Lys-Gly) (interchain with G-Cter in SUMO2).

This sequence belongs to the proteasome subunit S14 family. In terms of assembly, component of the 19S proteasome regulatory particle complex. The 26S proteasome consists of a 20S core particle (CP) and two 19S regulatory subunits (RP). The regulatory particle is made of a lid composed of 9 subunits including PSMD8, a base containing 6 ATPases and few additional components. Interacts with DDI2. Interacts with TASOR.

Its function is as follows. Component of the 26S proteasome, a multiprotein complex involved in the ATP-dependent degradation of ubiquitinated proteins. This complex plays a key role in the maintenance of protein homeostasis by removing misfolded or damaged proteins, which could impair cellular functions, and by removing proteins whose functions are no longer required. Therefore, the proteasome participates in numerous cellular processes, including cell cycle progression, apoptosis, or DNA damage repair. This Homo sapiens (Human) protein is 26S proteasome non-ATPase regulatory subunit 8 (PSMD8).